The following is a 548-amino-acid chain: Rop guanine nucleotide exchange factor 1 (548 aa).

Acidic residues predominate over residues 1 to 12 (MGSLSSEEDDEV). Residues 1–38 (MGSLSSEEDDEVSSERCGSYSPSADISESESSSSFSCH) are disordered. The span at 19–36 (SYSPSADISESESSSSFS) shows a compositional bias: low complexity. Residues 81–462 (DKQPDNDLSE…DAMRRSISVT (382 aa)) enclose the PRONE domain. Residues 458-548 (SISVTESLSL…RVTGVTPERD (91 aa)) form an involved in auto-inhibition region. Phosphoserine is present on residues Ser-460 and Ser-480.

Interacts with ARAC10/ROP11 and FER. Forms a complex with ARAC11/ROP1 and PRK2. Interacts in vitro (via PRONE domain) with PRK1, PRK2, PRK3 and PRK4. The C-terminal region is also important for the interaction with PRK2. In terms of processing, phosphorylated at Ser-460 and Ser-480 by PRK2. In terms of tissue distribution, expressed in roots, cotyledons, leaves, stems, sepals, petals, anthers, pollen grains, stigmas and siliques.

The protein localises to the cytoplasm. It localises to the cytosol. It is found in the cell membrane. Its activity is regulated as follows. Phosphorylation at Ser-460 and Ser-480 by PRK2 releases ROPGEF1 auto-inhibition, thereby activating ROPGEF1, which in turn activates ARAC11/ROP1. Its function is as follows. Guanine-nucleotide exchange factor (GEF) that acts as an activator of Rop (Rho of plants) GTPases by promoting the exchange of GDP for GTP. Acts downstream of PRK2 in the control of polarized pollen tube growth by activating ARAC11/ROP1. In association with ROPGEF4, acts as a specific regulator of ARAC10/ROP11 function in ABA-mediated stomatal closure. May play a role in the Rac/Rop-signaling pathway that controls ROS-mediated root hair development. This chain is Rop guanine nucleotide exchange factor 1 (ROPGEF1), found in Arabidopsis thaliana (Mouse-ear cress).